The primary structure comprises 46 residues: Esculentin-1 (46 aa).

An intrachain disulfide couples Cys40 to Cys46.

The protein belongs to the frog skin active peptide (FSAP) family. Brevinin subfamily. Expressed by the skin glands.

Its subcellular location is the secreted. Shows antibacterial activity against representative Gram-negative and Gram-positive bacterial species, and hemolytic activity. This is Esculentin-1 from Pelophylax lessonae (Pool frog).